A 515-amino-acid polypeptide reads, in one-letter code: Protein DETOXIFICATION 42 (515 aa).

Residues 1–35 (MMSEDGYNTDFPRNPLYIFFSDFRSVLKFDELGLE) are Cytoplasmic-facing. Residues 36–56 (IARIALPAALALTADPIASLV) traverse the membrane as a helical segment. At 57-58 (DT) the chain is on the extracellular side. Residues 59-79 (AFIGQIGPVELAAVGVSIALF) traverse the membrane as a helical segment. Topologically, residues 80–168 (NQVSRIAIFP…AKKRNIPSAS (89 aa)) are cytoplasmic. A helical transmembrane segment spans residues 169–189 (SALIIGGVLGLFQAVFLISAA). At 190–211 (KPLLSFMGVKHDSPMMRPSQRY) the chain is on the extracellular side. Residues 212–232 (LSLRSLGAPAVLLSLAAQGVF) traverse the membrane as a helical segment. Residues 233–242 (RGFKDTTTPL) are Cytoplasmic-facing. A helical transmembrane segment spans residues 243–263 (FATVIGDVTNIILDPIFIFVF). Topologically, residues 264–266 (RLG) are extracellular. Residues 267–287 (VTGAATAHVISQYLMCGILLW) form a helical membrane-spanning segment. The Cytoplasmic segment spans residues 288–312 (KLMGQVDIFNMSTKHLQFCRFMKNG). The chain crosses the membrane as a helical span at residues 313–333 (FLLLMRVIAVTFCVTLSASLA). Topologically, residues 334–349 (AREGSTSMAAFQVCLQ) are extracellular. The helical transmembrane segment at 350-370 (VWLATSLLADGYAVAGQAILA) threads the bilayer. Residues 371–390 (SAFAKKDYKRAAATASRVLQ) lie on the Cytoplasmic side of the membrane. Residues 391–411 (LGLVLGFVLAVILGAGLHFGA) form a helical membrane-spanning segment. The Extracellular portion of the chain corresponds to 412–423 (RVFTKDDKVLHL). A helical transmembrane segment spans residues 424 to 444 (ISIGLPFVAGTQPINALAFVF). Over 445 to 453 (DGVNFGASD) the chain is Cytoplasmic. A helical membrane pass occupies residues 454 to 474 (FGYAAASLVMVAIVSILCLLF). The Extracellular segment spans residues 475–480 (LSSTHG). The helical transmembrane segment at 481 to 501 (FIGLWFGLTIYMSLRAAVGFW) threads the bilayer. Residues 502 to 515 (RIGTGTGPWSFLRS) lie on the Cytoplasmic side of the membrane.

The protein belongs to the multi antimicrobial extrusion (MATE) (TC 2.A.66.1) family. Expressed in roots, but not in shoots. Detected in the mature regions of the root, extending from above the root-hair region to the root-shoot junction.

The protein localises to the cell membrane. Its function is as follows. Citrate transporter critical for aluminum tolerance. Responsible for citrate exudation into the rhizosphere to protect roots from aluminum toxicity. The sequence is that of Protein DETOXIFICATION 42 from Arabidopsis thaliana (Mouse-ear cress).